Here is a 275-residue protein sequence, read N- to C-terminus: Bis(5'-nucleosyl)-tetraphosphatase, symmetrical (275 aa).

The protein belongs to the Ap4A hydrolase family.

The catalysed reaction is P(1),P(4)-bis(5'-adenosyl) tetraphosphate + H2O = 2 ADP + 2 H(+). Its function is as follows. Hydrolyzes diadenosine 5',5'''-P1,P4-tetraphosphate to yield ADP. This Aggregatibacter actinomycetemcomitans (Actinobacillus actinomycetemcomitans) protein is Bis(5'-nucleosyl)-tetraphosphatase, symmetrical (apaH).